The chain runs to 507 residues: Fumarate hydratase, mitochondrial (507 aa).

Residues 1 to 41 constitute a mitochondrion transit peptide; the sequence is MYRALRLLARSRRLLRVPSAGAAVSGEATTLPRCAPNVARM. An N6-acetyllysine; alternate mark is found at Lys-58, Lys-63, and Lys-77. N6-succinyllysine; alternate occurs at positions 58, 63, and 77. Thr-82 is modified (phosphothreonine). An N6-acetyllysine; alternate mark is found at Lys-112 and Lys-119. An N6-succinyllysine; alternate mark is found at Lys-112 and Lys-119. Residues 142-144, 173-176, and 183-185 contribute to the substrate site; these read SGT, HPND, and SSN. An N6-acetyllysine modification is found at Lys-210. Lys-220 carries the N6-acetyllysine; alternate modification. Lys-220 is subject to N6-succinyllysine; alternate. Thr-231 provides a ligand contact to substrate. Catalysis depends on His-232, which acts as the Proton donor/acceptor. Thr-233 carries the post-translational modification Phosphothreonine. Lys-289 is modified (N6-acetyllysine; alternate). The residue at position 289 (Lys-289) is an N6-succinyllysine; alternate. Ser-362 is an active-site residue. Substrate-binding positions include Ser-363 and 368–370; that span reads KVN. The residue at position 363 (Ser-363) is a Phosphoserine. Residues Lys-464 and Lys-470 each carry the N6-succinyllysine modification. Residue Lys-499 is modified to N6-acetyllysine.

The protein belongs to the class-II fumarase/aspartase family. Fumarase subfamily. Homotetramer. Interacts with H2AZ1. Phosphorylation at Thr-233 by PRKDC in response to DNA damage promotes translocation to the nucleus and recruitment to DNA double-strand breaks (DSBs).

It localises to the mitochondrion. The protein resides in the cytoplasm. It is found in the cytosol. The protein localises to the nucleus. Its subcellular location is the chromosome. The enzyme catalyses (S)-malate = fumarate + H2O. It participates in carbohydrate metabolism; tricarboxylic acid cycle; (S)-malate from fumarate: step 1/1. Functionally, catalyzes the reversible stereospecific interconversion of fumarate to L-malate. Experiments in different species have demonstrated that specific isoforms of this protein act in defined pathways and favor one direction over the other. Its function is as follows. Catalyzes the hydration of fumarate to L-malate in the tricarboxylic acid (TCA) cycle to facilitate a transition step in the production of energy in the form of NADH. Catalyzes the dehydration of L-malate to fumarate. Fumarate metabolism in the cytosol plays a role during urea cycle and arginine metabolism; fumarate being a by-product of the urea cycle and amino-acid catabolism. Also plays a role in DNA repair by promoting non-homologous end-joining (NHEJ). In response to DNA damage and phosphorylation by PRKDC, translocates to the nucleus and accumulates at DNA double-strand breaks (DSBs): acts by catalyzing formation of fumarate, an inhibitor of KDM2B histone demethylase activity, resulting in enhanced dimethylation of histone H3 'Lys-36' (H3K36me2). The protein is Fumarate hydratase, mitochondrial of Mus musculus (Mouse).